A 78-amino-acid chain; its full sequence is Large ribosomal subunit protein eL38 (78 aa).

Belongs to the eukaryotic ribosomal protein eL38 family. In terms of assembly, component of the large ribosomal subunit. Mature ribosomes consist of a small (40S) and a large (60S) subunit. The 40S subunit contains about 32 different proteins and 1 molecule of RNA (18S). The 60S subunit contains 45 different proteins and 3 molecules of RNA (25S, 5.8S and 5S).

Its subcellular location is the cytoplasm. Functionally, component of the ribosome, a large ribonucleoprotein complex responsible for the synthesis of proteins in the cell. The small ribosomal subunit (SSU) binds messenger RNAs (mRNAs) and translates the encoded message by selecting cognate aminoacyl-transfer RNA (tRNA) molecules. The large subunit (LSU) contains the ribosomal catalytic site termed the peptidyl transferase center (PTC), which catalyzes the formation of peptide bonds, thereby polymerizing the amino acids delivered by tRNAs into a polypeptide chain. The nascent polypeptides leave the ribosome through a tunnel in the LSU and interact with protein factors that function in enzymatic processing, targeting, and the membrane insertion of nascent chains at the exit of the ribosomal tunnel. The polypeptide is Large ribosomal subunit protein eL38 (Candida albicans (strain SC5314 / ATCC MYA-2876) (Yeast)).